We begin with the raw amino-acid sequence, 515 residues long: Anthranilate synthase component 1 (515 aa).

L-tryptophan is bound by residues Ser-50 and 281 to 283 (PYM). 316–317 (GT) is a chorismate binding site. Glu-343 contacts Mg(2+). Chorismate-binding positions include Tyr-431, Arg-451, 465 to 467 (GAG), and Gly-467. Residue Glu-480 participates in Mg(2+) binding.

The protein belongs to the anthranilate synthase component I family. In terms of assembly, heterotetramer consisting of two non-identical subunits: a beta subunit (TrpG) and a large alpha subunit (TrpE). Mg(2+) is required as a cofactor.

It carries out the reaction chorismate + L-glutamine = anthranilate + pyruvate + L-glutamate + H(+). The protein operates within amino-acid biosynthesis; L-tryptophan biosynthesis; L-tryptophan from chorismate: step 1/5. Its activity is regulated as follows. Feedback inhibited by tryptophan. Its function is as follows. Part of a heterotetrameric complex that catalyzes the two-step biosynthesis of anthranilate, an intermediate in the biosynthesis of L-tryptophan. In the first step, the glutamine-binding beta subunit (TrpG) of anthranilate synthase (AS) provides the glutamine amidotransferase activity which generates ammonia as a substrate that, along with chorismate, is used in the second step, catalyzed by the large alpha subunit of AS (TrpE) to produce anthranilate. In the absence of TrpG, TrpE can synthesize anthranilate directly from chorismate and high concentrations of ammonia. The chain is Anthranilate synthase component 1 (trpE) from Bacillus subtilis (strain 168).